We begin with the raw amino-acid sequence, 812 residues long: Plasminogen (812 aa).

Residues 1–19 (MDHKEVILLFLLLLKPGQG) form the signal peptide. The 79-residue stretch at 20 to 98 (DSLDGYISTQ…RDVILFEKRV (79 aa)) folds into the PAN domain. Disulfide bonds link C49–C73, C53–C61, C103–C181, C124–C164, C152–C176, C185–C262, C188–C316, C206–C245, C234–C257, C275–C352, C296–C335, C324–C347, C377–C454, C398–C437, C426–C449, C481–C560, C502–C543, C531–C555, C568–C687, C578–C586, and C609–C625. Kringle domains are found at residues 103 to 181 (CKTG…IPEC), 184 to 262 (ECMY…IPRC), 275 to 352 (CLKG…IPSC), 377 to 454 (CYQS…LKRC), and 481 to 560 (CMYG…IPLC). Positions 582–810 (VVGGCVANPH…FVDWIEREMR (229 aa)) constitute a Peptidase S1 domain. Residue S598 is modified to Phosphoserine. Residues H624 and D667 each act as charge relay system in the active site. S690 is modified (phosphoserine). 3 cysteine pairs are disulfide-bonded: C701–C768, C731–C747, and C758–C786. The active-site Charge relay system is the S762.

This sequence belongs to the peptidase S1 family. Plasminogen subfamily. Interacts (both mature PLG and the angiostatin peptide) with AMOT and CSPG4. Interacts (via the Kringle domains) with HRG; the interaction tethers PLG to the cell surface and enhances its activation. Interacts (via Kringle 4 domain) with ADA; the interaction stimulates PLG activation when in complex with DPP4. Angiostatin: Interacts with ATP5F1A; the interaction inhibits most of the angiogenic effects of angiostatin. Post-translationally, in the presence of the inhibitor, the activation involves only cleavage after Arg-581, yielding two chains held together by two disulfide bonds. In the absence of the inhibitor, the activation involves additionally the removal of the activation peptide.

It localises to the secreted. The catalysed reaction is Preferential cleavage: Lys-|-Xaa &gt; Arg-|-Xaa, higher selectivity than trypsin. Converts fibrin into soluble products.. Its activity is regulated as follows. Converted into plasmin by plasminogen activators, both plasminogen and its activator being bound to fibrin. Cannot be activated with streptokinase. In terms of biological role, plasmin dissolves the fibrin of blood clots and acts as a proteolytic factor in a variety of other processes including embryonic development, tissue remodeling, tumor invasion, and inflammation. In ovulation, weakens the walls of the Graafian follicle. It activates the urokinase-type plasminogen activator, collagenases and several complement zymogens, such as C1, C4 and C5. Cleavage of fibronectin and laminin leads to cell detachment and apoptosis. Also cleaves fibrin, thrombospondin and von Willebrand factor. Its role in tissue remodeling and tumor invasion may be modulated by CSPG4. Binds to cells. Its function is as follows. Angiostatin is an angiogenesis inhibitor that blocks neovascularization and growth of experimental primary and metastatic tumors in vivo. This chain is Plasminogen (Plg), found in Mus musculus (Mouse).